A 189-amino-acid chain; its full sequence is Interferon alpha-10 (189 aa).

A signal peptide spans 1–23 (MALSFSLLMAVLVLSYKSICSLG). Cystine bridges form between Cys24–Cys122 and Cys52–Cys162.

This sequence belongs to the alpha/beta interferon family.

Its subcellular location is the secreted. In terms of biological role, produced by macrophages, IFN-alpha have antiviral activities. Interferon stimulates the production of two enzymes: a protein kinase and an oligoadenylate synthetase. The chain is Interferon alpha-10 (IFNA10) from Homo sapiens (Human).